We begin with the raw amino-acid sequence, 288 residues long: Protein shisa-2 (288 aa).

The N-terminal stretch at 1–23 (MWLEGSPLAVLAAVSFLLSVLAA) is a signal peptide. At 24–110 (AQGSGEYCHG…DSTAVPIYVP (87 aa)) the chain is on the extracellular side. Residues 111–131 (FLIVGSVFVAFIIVGSLVAIC) traverse the membrane as a helical segment. Topologically, residues 132 to 288 (CCRCLRPKQE…EQMMYPAVTV (157 aa)) are cytoplasmic. Over residues 161-188 (SSASTSRGSSSRQSSTAASSSSSANSGA) the composition is skewed to low complexity. Residues 161-198 (SSASTSRGSSSRQSSTAASSSSSANSGARPPPTRSQTN) are disordered.

This sequence belongs to the shisa family. As to quaternary structure, interacts with fzd8 and fgfr1.

It localises to the endoplasmic reticulum membrane. In terms of biological role, plays an essential role in the maturation of presomitic mesoderm cells by individual attenuation of both fgf and wnt signaling. Inhibits both wnt and fgf signaling through the regulation of protein maturation and cell surface transportation of their receptors within the endoplasmic reticulum. In Xenopus laevis (African clawed frog), this protein is Protein shisa-2 (shisa2).